A 363-amino-acid chain; its full sequence is Histidinol-phosphate aminotransferase (363 aa).

An N6-(pyridoxal phosphate)lysine modification is found at Lys226.

This sequence belongs to the class-II pyridoxal-phosphate-dependent aminotransferase family. Histidinol-phosphate aminotransferase subfamily. As to quaternary structure, homodimer. Pyridoxal 5'-phosphate is required as a cofactor.

The enzyme catalyses L-histidinol phosphate + 2-oxoglutarate = 3-(imidazol-4-yl)-2-oxopropyl phosphate + L-glutamate. The protein operates within amino-acid biosynthesis; L-histidine biosynthesis; L-histidine from 5-phospho-alpha-D-ribose 1-diphosphate: step 7/9. This is Histidinol-phosphate aminotransferase from Campylobacter lari (strain RM2100 / D67 / ATCC BAA-1060).